The sequence spans 255 residues: Taurine import ATP-binding protein TauB (255 aa).

Positions 2 to 229 constitute an ABC transporter domain; the sequence is LNVSGLWAEY…RYAEGEPCRA (228 aa). ATP is bound at residue 34–41; the sequence is GPSGCGKT.

The protein belongs to the ABC transporter superfamily. Taurine importer (TC 3.A.1.17.1) family. In terms of assembly, the complex is composed of two ATP-binding proteins (TauB), two transmembrane proteins (TauC) and a solute-binding protein (TauA).

Its subcellular location is the cell inner membrane. It carries out the reaction taurine(out) + ATP + H2O = taurine(in) + ADP + phosphate + H(+). Functionally, part of the ABC transporter complex TauABC involved in taurine import. Responsible for energy coupling to the transport system. The polypeptide is Taurine import ATP-binding protein TauB (Yersinia pestis bv. Antiqua (strain Antiqua)).